The primary structure comprises 1105 residues: AP-3 complex subunit beta-1 (1105 aa).

Disordered regions lie at residues 1–26 (MSSN…EATS) and 271–292 (KNFY…KKSY). 2 positions are modified to phosphoserine: Ser-276 and Ser-610. The disordered stretch occupies residues 668 to 824 (KKEKPMKKFY…KPQQERHPPS (157 aa)). The span at 679–704 (ESEEEEDEDEDEDEEEEEKEDEDENP) shows a compositional bias: acidic residues. Low complexity-rich tracts occupy residues 705–722 (SDSS…SGDT) and 730–741 (DSSSGQDSETGS). Positions 750 to 759 (VAKRNSKTKR) are enriched in basic residues. Over residues 760–774 (KSDSENREKKNENSK) the composition is skewed to basic and acidic residues. Residues Ser-761 and Ser-763 each carry the phosphoserine modification. A compositionally biased stretch (low complexity) spans 775 to 788 (ASESSSEESSSMED). The span at 789 to 799 (SSSESESESGS) shows a compositional bias: acidic residues. Residues 811–824 (AKERKPQQERHPPS) are compositionally biased toward basic and acidic residues.

This sequence belongs to the adaptor complexes large subunit family. In terms of assembly, adaptor protein complex 3 (AP-3) is a heterotetramer composed of two large adaptins (delta-type subunit AP3D1 and beta-type subunit AP3B1 or AP3B2), a medium adaptin (mu-type subunit AP3M1 or AP3M2) and a small adaptin (sigma-type subunit APS1 or AP3S2). AP-3 associates with the BLOC-1 complex. Interacts with KIF3A; interaction is direct; interaction is impaired by pyrophosphorylation of AP3B1. In terms of processing, phosphorylated on serine residues. Post-translationally, pyrophosphorylated by 5-diphosphoinositol pentakisphosphate (5-IP7). Pyrophosphorylation impairs interaction with KIF3A. Serine pyrophosphorylation is achieved by Mg(2+)-dependent, but enzyme independent transfer of a beta-phosphate from a inositol pyrophosphate to a pre-phosphorylated serine residue. As to expression, ubiquitously expressed.

It is found in the cytoplasmic vesicle. The protein resides in the clathrin-coated vesicle membrane. It localises to the golgi apparatus. Its function is as follows. Subunit of non-clathrin- and clathrin-associated adaptor protein complex 3 (AP-3) that plays a role in protein sorting in the late-Golgi/trans-Golgi network (TGN) and/or endosomes. The AP complexes mediate both the recruitment of clathrin to membranes and the recognition of sorting signals within the cytosolic tails of transmembrane cargo molecules. AP-3 appears to be involved in the sorting of a subset of transmembrane proteins targeted to lysosomes and lysosome-related organelles. In concert with the BLOC-1 complex, AP-3 is required to target cargos into vesicles assembled at cell bodies for delivery into neurites and nerve terminals. The polypeptide is AP-3 complex subunit beta-1 (Ap3b1) (Mus musculus (Mouse)).